The chain runs to 208 residues: Small ribosomal subunit protein uS4 (208 aa).

An S4 RNA-binding domain is found at 97-160 (TRLDNVCYRM…QKQLRVQEAL (64 aa)).

The protein belongs to the universal ribosomal protein uS4 family. In terms of assembly, part of the 30S ribosomal subunit. Contacts protein S5. The interaction surface between S4 and S5 is involved in control of translational fidelity.

One of the primary rRNA binding proteins, it binds directly to 16S rRNA where it nucleates assembly of the body of the 30S subunit. In terms of biological role, with S5 and S12 plays an important role in translational accuracy. This chain is Small ribosomal subunit protein uS4, found in Xanthomonas axonopodis pv. citri (strain 306).